The chain runs to 118 residues: UPF0102 protein ROP_66030 (118 aa).

The protein belongs to the UPF0102 family.

The protein is UPF0102 protein ROP_66030 of Rhodococcus opacus (strain B4).